The chain runs to 451 residues: Probable D-serine dehydratase (451 aa).

The segment at 1-55 (MPGRTRPSCRLAITFTPRPDSATPRAGRAAPATGRRSNRSRSTLSATASPMPRRP) is disordered. The segment covering 22 to 35 (ATPRAGRAAPATGR) has biased composition (low complexity). Position 118 is an N6-(pyridoxal phosphate)lysine (Lys-118).

The protein belongs to the serine/threonine dehydratase family. DsdA subfamily. Requires pyridoxal 5'-phosphate as cofactor.

It catalyses the reaction D-serine = pyruvate + NH4(+). This Paracidovorax citrulli (strain AAC00-1) (Acidovorax citrulli) protein is Probable D-serine dehydratase.